Consider the following 228-residue polypeptide: Triosephosphate isomerase (228 aa).

Substrate is bound at residue 9-11 (NFK). H93 (electrophile) is an active-site residue. Residue E141 is the Proton acceptor of the active site. Substrate-binding positions include I146, G180, and 201-202 (AS).

Belongs to the triosephosphate isomerase family. In terms of assembly, homotetramer; dimer of dimers.

It is found in the cytoplasm. The enzyme catalyses D-glyceraldehyde 3-phosphate = dihydroxyacetone phosphate. Its pathway is carbohydrate biosynthesis; gluconeogenesis. It participates in carbohydrate degradation; glycolysis; D-glyceraldehyde 3-phosphate from glycerone phosphate: step 1/1. Functionally, involved in the gluconeogenesis. Catalyzes stereospecifically the conversion of dihydroxyacetone phosphate (DHAP) to D-glyceraldehyde-3-phosphate (G3P). This is Triosephosphate isomerase from Metallosphaera sedula (strain ATCC 51363 / DSM 5348 / JCM 9185 / NBRC 15509 / TH2).